An 82-amino-acid chain; its full sequence is Sulfur carrier protein TusA (82 aa).

Residue C19 is the Cysteine persulfide intermediate of the active site.

This sequence belongs to the sulfur carrier protein TusA family.

Its subcellular location is the cytoplasm. Its function is as follows. Sulfur carrier protein which probably makes part of a sulfur-relay system. This chain is Sulfur carrier protein TusA, found in Vibrio parahaemolyticus serotype O3:K6 (strain RIMD 2210633).